Reading from the N-terminus, the 375-residue chain is MAATTPAQDVGVEIYLGPVWPAPSNSTPLALNLSLALREDAPGNLTGDLSEHQQYVIALFLSCLYTIFLFPIGFVGNILILVVNISFREKMTIPDLYFINLAAADLILVADSLIEVFNLDEQYYDIAVLCTFMSLFLQINMYSSVFFLTWMSFDRYLALAKAMRCGLFRTKHHARLSCGLIWMASVSATLVPFTAVHLRHTEEACFCFADVREVQWLEVTLGFIVPFAIIGLCYSLIVRALIRAHRHRGLRPRRQKALRMIFAVVLVFFICWLPENVFISVHLLQWAQPGDTPCKQSFRHAYPLTGHIVNLAAFSNSCLSPLIYSFLGETFRDKLRLYVAQKTSLPALNRFCHATLKAVIPDSTEQSDVKFSSAV.

Position 1 is an N-acetylmethionine (M1). Over 1–62 (MAATTPAQDV…QQYVIALFLS (62 aa)) the chain is Extracellular. Residues N32 and N44 are each glycosylated (N-linked (GlcNAc...) asparagine). The helical transmembrane segment at 63-84 (CLYTIFLFPIGFVGNILILVVN) threads the bilayer. The Cytoplasmic portion of the chain corresponds to 85 to 96 (ISFREKMTIPDL). The helical transmembrane segment at 97–120 (YFINLAAADLILVADSLIEVFNLD) threads the bilayer. At 121–132 (EQYYDIAVLCTF) the chain is on the extracellular side. A disulfide bond links C130 and C207. Residues 133–153 (MSLFLQINMYSSVFFLTWMSF) traverse the membrane as a helical segment. The Cytoplasmic segment spans residues 154 to 175 (DRYLALAKAMRCGLFRTKHHAR). Residues 176–194 (LSCGLIWMASVSATLVPFT) traverse the membrane as a helical segment. At 195-220 (AVHLRHTEEACFCFADVREVQWLEVT) the chain is on the extracellular side. A helical membrane pass occupies residues 221–236 (LGFIVPFAIIGLCYSL). Topologically, residues 237–259 (IVRALIRAHRHRGLRPRRQKALR) are cytoplasmic. The helical transmembrane segment at 260 to 280 (MIFAVVLVFFICWLPENVFIS) threads the bilayer. Residues 281–306 (VHLLQWAQPGDTPCKQSFRHAYPLTG) are Extracellular-facing. The helical transmembrane segment at 307-327 (HIVNLAAFSNSCLSPLIYSFL) threads the bilayer. The Cytoplasmic segment spans residues 328-375 (GETFRDKLRLYVAQKTSLPALNRFCHATLKAVIPDSTEQSDVKFSSAV).

This sequence belongs to the G-protein coupled receptor 1 family. As to quaternary structure, homodimer. Heterodimer; heterodimerizes with other G-protein-coupled receptor (GPCRs) like CRHR1, HTR1A and PAQR8. Interacts with RAMP3; the interaction confers proper subcellular localization and function in cardioprotection. Interacts with KRT7 and KRT8. Interacts with EGFR; the interaction increases after agonist-induced stimulation in cancer-associated fibroblasts (CAF). Interacts with EGFR and ESR1. Interacts (via C-terminus tail motif) with DLG4 (via N-terminus tandem pair of PDZ domains); the interaction is direct and induces the increase of GPER1 protein levels residing at the plasma membrane surface in a estradiol-independent manner. Ubiquitinated; ubiquitination occurs at the plasma membrane and leads to proteasome-mediated degradation. Post-translationally, glycosylated. As to expression, expressed in the brain. Expressed in neurons of the hippocampus, hypothalamic paraventricular nucleus (PVN), supraoptic nucleus (SON) and the median eminence. Expressed in magnocellular neurosecretory cells (MNCs) which secrete oxytocin but not in MNCs which secrete vasopressin. Expressed in glial cells. Expressed in the nucleus ambiguous. Expressed in epithelial cells, in pachytene spermatocytes (PS) (at protein level). Expressed strongly in vascular endothelial cells and poorly in vascular smooth muscle cells (VSMC). Expressed in the brain, lung, pituitary gland, adrenal medulla, renal pelvis and ovary. Expressed in CA1 hippocampus. Expressed weakly in heart, skeletal muscle and kidney.

It localises to the nucleus. The protein localises to the cytoplasm. Its subcellular location is the perinuclear region. It is found in the cytoskeleton. The protein resides in the cytoplasmic vesicle membrane. It localises to the cell membrane. The protein localises to the basolateral cell membrane. Its subcellular location is the endoplasmic reticulum membrane. It is found in the early endosome. The protein resides in the recycling endosome. It localises to the golgi apparatus. The protein localises to the trans-Golgi network. Its subcellular location is the golgi apparatus membrane. It is found in the cell projection. The protein resides in the dendrite. It localises to the dendritic spine membrane. The protein localises to the axon. Its subcellular location is the postsynaptic density. It is found in the mitochondrion membrane. G-protein coupled estrogen receptor that binds to 17-beta-estradiol (E2) with high affinity, leading to rapid and transient activation of numerous intracellular signaling pathways. Stimulates cAMP production, calcium mobilization and tyrosine kinase Src inducing the release of heparin-bound epidermal growth factor (HB-EGF) and subsequent transactivation of the epidermal growth factor receptor (EGFR), activating downstream signaling pathways such as PI3K/Akt and ERK/MAPK. Mediates pleiotropic functions among others in the cardiovascular, endocrine, reproductive, immune and central nervous systems. Has a role in cardioprotection by reducing cardiac hypertrophy and perivascular fibrosis in a RAMP3-dependent manner. Regulates arterial blood pressure by stimulating vasodilation and reducing vascular smooth muscle and microvascular endothelial cell proliferation. Plays a role in blood glucose homeostasis contributing to the insulin secretion response by pancreatic beta cells. Triggers mitochondrial apoptosis during pachytene spermatocyte differentiation. Stimulates uterine epithelial cell proliferation. Enhances uterine contractility in response to oxytocin. Contributes to thymic atrophy by inducing apoptosis. Attenuates TNF-mediated endothelial expression of leukocyte adhesion molecules. Promotes neuritogenesis in developing hippocampal neurons. Plays a role in acute neuroprotection against NMDA-induced excitotoxic neuronal death. Increases firing activity and intracellular calcium oscillations in luteinizing hormone-releasing hormone (LHRH) neurons. Inhibits early osteoblast proliferation at growth plate during skeletal development. Inhibits mature adipocyte differentiation and lipid accumulation. Involved in the recruitment of beta-arrestin 2 ARRB2 at the plasma membrane in epithelial cells. Also functions as a receptor for aldosterone mediating rapid regulation of vascular contractibility through the PI3K/ERK signaling pathway. Involved in cancer progression regulation. Stimulates cancer-associated fibroblast (CAF) proliferation by a rapid genomic response through the EGFR/ERK transduction pathway. Associated with EGFR, may act as a transcription factor activating growth regulatory genes (c-fos, cyclin D1). Promotes integrin alpha-5/beta-1 and fibronectin (FN) matrix assembly in breast cancer cells. The protein is G-protein coupled estrogen receptor 1 (Gper1) of Rattus norvegicus (Rat).